A 388-amino-acid polypeptide reads, in one-letter code: Succinate--CoA ligase [ADP-forming] subunit beta (388 aa).

ATP is bound by residues lysine 46, 53-55 (GRG), glutamate 99, cysteine 102, and glutamate 107. Asparagine 199 and aspartate 213 together coordinate Mg(2+). Substrate-binding positions include asparagine 264 and 321–323 (GIV).

The protein belongs to the succinate/malate CoA ligase beta subunit family. As to quaternary structure, heterotetramer of two alpha and two beta subunits. The cofactor is Mg(2+).

It catalyses the reaction succinate + ATP + CoA = succinyl-CoA + ADP + phosphate. The catalysed reaction is GTP + succinate + CoA = succinyl-CoA + GDP + phosphate. Its pathway is carbohydrate metabolism; tricarboxylic acid cycle; succinate from succinyl-CoA (ligase route): step 1/1. Succinyl-CoA synthetase functions in the citric acid cycle (TCA), coupling the hydrolysis of succinyl-CoA to the synthesis of either ATP or GTP and thus represents the only step of substrate-level phosphorylation in the TCA. The beta subunit provides nucleotide specificity of the enzyme and binds the substrate succinate, while the binding sites for coenzyme A and phosphate are found in the alpha subunit. The protein is Succinate--CoA ligase [ADP-forming] subunit beta of Actinobacillus pleuropneumoniae serotype 7 (strain AP76).